Reading from the N-terminus, the 233-residue chain is Cilia- and flagella-associated protein 299 (233 aa).

It is found in the cytoplasm. Its subcellular location is the nucleus. Functionally, may be involved in spermatogenesis. The sequence is that of Cilia- and flagella-associated protein 299 from Homo sapiens (Human).